A 217-amino-acid polypeptide reads, in one-letter code: Small ribosomal subunit protein uS11m (217 aa).

The N-terminal 59 residues, 1 to 59 (MLLQPVWKGCRWTQFVRPIRRWNSTGTNRGVPFSFKDISNQEDITNISYPSSSDSVLTK), are a transit peptide targeting the mitochondrion.

Belongs to the universal ribosomal protein uS11 family. In terms of assembly, component of the mitochondrial small ribosomal subunit (mt-SSU). Mature yeast 74S mitochondrial ribosomes consist of a small (37S) and a large (54S) subunit. The 37S small subunit contains a 15S ribosomal RNA (15S mt-rRNA) and 34 different proteins. The 54S large subunit contains a 21S rRNA (21S mt-rRNA) and 46 different proteins.

It localises to the mitochondrion. Component of the mitochondrial ribosome (mitoribosome), a dedicated translation machinery responsible for the synthesis of mitochondrial genome-encoded proteins, including at least some of the essential transmembrane subunits of the mitochondrial respiratory chain. The mitoribosomes are attached to the mitochondrial inner membrane and translation products are cotranslationally integrated into the membrane. This is Small ribosomal subunit protein uS11m (MRPS18) from Saccharomyces cerevisiae (strain ATCC 204508 / S288c) (Baker's yeast).